The primary structure comprises 312 residues: Ornithine carbamoyltransferase (312 aa).

Residues 60–63, Gln-87, Arg-111, and 138–141 each bind carbamoyl phosphate; these read STRT and HPCQ. Residues Asn-169, Asp-229, and 233–234 each bind L-ornithine; that span reads SM. Carbamoyl phosphate is bound by residues 268–269 and Arg-296; that span reads CL.

The protein belongs to the aspartate/ornithine carbamoyltransferase superfamily. OTCase family.

Its subcellular location is the cytoplasm. The enzyme catalyses carbamoyl phosphate + L-ornithine = L-citrulline + phosphate + H(+). It functions in the pathway amino-acid biosynthesis; L-arginine biosynthesis; L-arginine from L-ornithine and carbamoyl phosphate: step 1/3. Functionally, reversibly catalyzes the transfer of the carbamoyl group from carbamoyl phosphate (CP) to the N(epsilon) atom of ornithine (ORN) to produce L-citrulline. In Rhodopseudomonas palustris (strain BisA53), this protein is Ornithine carbamoyltransferase.